A 204-amino-acid polypeptide reads, in one-letter code: Small ribosomal subunit protein uS4 (204 aa).

In terms of domain architecture, S4 RNA-binding spans 92–153 (RRLDALVLRS…RSKEKTLFTI (62 aa)).

Belongs to the universal ribosomal protein uS4 family. As to quaternary structure, part of the 30S ribosomal subunit. Contacts protein S5. The interaction surface between S4 and S5 is involved in control of translational fidelity.

Its function is as follows. One of the primary rRNA binding proteins, it binds directly to 16S rRNA where it nucleates assembly of the body of the 30S subunit. With S5 and S12 plays an important role in translational accuracy. The polypeptide is Small ribosomal subunit protein uS4 (Streptomyces coelicolor (strain ATCC BAA-471 / A3(2) / M145)).